Here is a 1704-residue protein sequence, read N- to C-terminus: Vitellogenin-1 (1704 aa).

An N-terminal signal peptide occupies residues 1–14 (MKAVVLALTLAFVA). In terms of domain architecture, Vitellogenin spans 22 to 660 (FAAGKTYVYK…DAATFMPKSF (639 aa)). N-linked (GlcNAc...) asparagine glycosylation is found at Asn446, Asn635, Asn903, Asn908, Asn1019, Asn1054, Asn1080, Asn1121, Asn1174, Asn1285, Asn1322, Asn1375, Asn1379, Asn1405, Asn1456, and Asn1512. The segment covering 1078 to 1109 (RRNSSSSSSSSSSSSSESRSSRSSSSSSSSSR) has biased composition (low complexity). Residues 1078 to 1213 (RRNSSSSSSS…SSDRRSKEVM (136 aa)) are disordered. A compositionally biased stretch (low complexity) spans 1122 to 1204 (SSSSSSSRRS…FSDSSSSSSS (83 aa)). Residues 1442 to 1617 (AECSFVEDTL…SWILPAESCR (176 aa)) form the VWFD domain. 2 disulfide bridges follow: Cys1444–Cys1580 and Cys1467–Cys1616.

In terms of processing, phosvitin, an egg yolk storage protein, is one of the most highly phosphorylated (10%) proteins in nature. The N-terminal of the blood vitellogenin is blocked. In terms of tissue distribution, produced by the liver, secreted into the blood and then sequestered by receptor mediated endocytosis into growing oocytes, where it is generally cleaved, giving rise to the respective yolk components composed of complex suite of small cleavage products.

Its function is as follows. Precursor of the major egg-yolk proteins that are sources of nutrients during early development of oviparous organisms. This chain is Vitellogenin-1 (vtg1), found in Fundulus heteroclitus (Killifish).